Here is a 303-residue protein sequence, read N- to C-terminus: Ribosomal RNA small subunit methyltransferase H (303 aa).

Residues 36–38 (CGH), aspartate 55, phenylalanine 81, aspartate 101, and glutamine 108 contribute to the S-adenosyl-L-methionine site.

This sequence belongs to the methyltransferase superfamily. RsmH family.

It is found in the cytoplasm. The enzyme catalyses cytidine(1402) in 16S rRNA + S-adenosyl-L-methionine = N(4)-methylcytidine(1402) in 16S rRNA + S-adenosyl-L-homocysteine + H(+). Its function is as follows. Specifically methylates the N4 position of cytidine in position 1402 (C1402) of 16S rRNA. This is Ribosomal RNA small subunit methyltransferase H from Aster yellows witches'-broom phytoplasma (strain AYWB).